The primary structure comprises 383 residues: MSKQDYYELLGVEKGASPDDIKKAYRKQAMQFHPDRNPGNADAEQKFKEINEAYDVLKDEQKRAAYDRFGHAAFEQGGPGGGGGGGFGGFGGGGFSDIFDEMFGEFMGGGGRRGQSTGRGADLRYNMDISLEDAFAGKTATVKVPSSAPCEDCKGTGGKDGAQPVTCSACHGHGKVRQQQGFFTIERTCPTCQGMGKIIKDPCRSCGGSGRTRKEKTLQVNIPAGVEDGTRIRLAGEGEAGMRGAPAGDLYIFLSIAAHRIFQRDGANIFCRVPIPMTTAALGGTIEVPTIDGSKAKVTIPEGTQTGNQFRLRSKGMSVLRSPARGDMFIQAVVETPVNLTKRQKELLNEFNEAGEGEKAKNSPESQGFFAKVKELWEDLKEG.

One can recognise a J domain in the interval 5–70 (DYYELLGVEK…QKRAAYDRFG (66 aa)). Residues 137–215 (GKTATVKVPS…CGGSGRTRKE (79 aa)) form a CR-type zinc finger. Residues C150, C153, C167, C170, C189, C192, C203, and C206 each contribute to the Zn(2+) site. CXXCXGXG motif repeat units follow at residues 150–157 (CEDCKGTG), 167–174 (CSACHGHG), 189–196 (CPTCQGMG), and 203–210 (CRSCGGSG).

This sequence belongs to the DnaJ family. In terms of assembly, homodimer. Zn(2+) serves as cofactor.

It is found in the cytoplasm. Functionally, participates actively in the response to hyperosmotic and heat shock by preventing the aggregation of stress-denatured proteins and by disaggregating proteins, also in an autonomous, DnaK-independent fashion. Unfolded proteins bind initially to DnaJ; upon interaction with the DnaJ-bound protein, DnaK hydrolyzes its bound ATP, resulting in the formation of a stable complex. GrpE releases ADP from DnaK; ATP binding to DnaK triggers the release of the substrate protein, thus completing the reaction cycle. Several rounds of ATP-dependent interactions between DnaJ, DnaK and GrpE are required for fully efficient folding. Also involved, together with DnaK and GrpE, in the DNA replication of plasmids through activation of initiation proteins. This is Chaperone protein DnaJ from Paramagnetospirillum magneticum (strain ATCC 700264 / AMB-1) (Magnetospirillum magneticum).